Consider the following 226-residue polypeptide: Ribonuclease 3 (226 aa).

The 123-residue stretch at Phe-6–Asn-128 folds into the RNase III domain. Position 41 (Glu-41) interacts with Mg(2+). Asp-45 is a catalytic residue. Positions 114 and 117 each coordinate Mg(2+). Residue Glu-117 is part of the active site. The 71-residue stretch at Asp-155–Ile-225 folds into the DRBM domain.

Belongs to the ribonuclease III family. In terms of assembly, homodimer. Requires Mg(2+) as cofactor.

The protein localises to the cytoplasm. The enzyme catalyses Endonucleolytic cleavage to 5'-phosphomonoester.. In terms of biological role, digests double-stranded RNA. Involved in the processing of primary rRNA transcript to yield the immediate precursors to the large and small rRNAs (23S and 16S). Processes some mRNAs, and tRNAs when they are encoded in the rRNA operon. Processes pre-crRNA and tracrRNA of type II CRISPR loci if present in the organism. The sequence is that of Ribonuclease 3 from Wigglesworthia glossinidia brevipalpis.